Consider the following 380-residue polypeptide: Cytochrome b (380 aa).

4 helical membrane passes run 34 to 54 (FGSL…LLAM), 78 to 99 (WLIR…FLHI), 114 to 134 (WNTG…GYVL), and 179 to 199 (FFAL…IHLT). Heme b-binding residues include H84 and H98. Residues H183 and H197 each contribute to the heme b site. H202 is an a ubiquinone binding site. The next 4 membrane-spanning stretches (helical) occupy residues 227–247 (FKDI…ALFS), 289–309 (LGGV…PFLH), 321–341 (LSQT…WIGS), and 348–368 (FIII…ILFP).

This sequence belongs to the cytochrome b family. As to quaternary structure, the cytochrome bc1 complex contains 11 subunits: 3 respiratory subunits (MT-CYB, CYC1 and UQCRFS1), 2 core proteins (UQCRC1 and UQCRC2) and 6 low-molecular weight proteins (UQCRH/QCR6, UQCRB/QCR7, UQCRQ/QCR8, UQCR10/QCR9, UQCR11/QCR10 and a cleavage product of UQCRFS1). This cytochrome bc1 complex then forms a dimer. Requires heme b as cofactor.

Its subcellular location is the mitochondrion inner membrane. Component of the ubiquinol-cytochrome c reductase complex (complex III or cytochrome b-c1 complex) that is part of the mitochondrial respiratory chain. The b-c1 complex mediates electron transfer from ubiquinol to cytochrome c. Contributes to the generation of a proton gradient across the mitochondrial membrane that is then used for ATP synthesis. The protein is Cytochrome b (MT-CYB) of Gallus gallus (Chicken).